The chain runs to 2190 residues: MQHHQQQQPEQHPEEANYASSTRIPLPGDGPTTQSNSSAPSKQTVLSWQAAIDAARQAKAAQNMNTTTAQPVGSLSQRKRQQYAKSKKQGNTSNSRPPRALFCLSLNNPIRRACISLVEWKPFDIFILLSIFANCVALAVYIPFPEDDSNSTNHNLEKVEYAFLIIFTVETFLKIIAYGLLLHPNAYVRNGWNLLDFVIVVVGLFSVILEQLTKETEGGSHSGGKPGGFDVKALRAFRVLRPLRLVSGVPSLQVVLNSIIKAMVPLLHIALLVLFVIIIYAIIGLELFIGKMHKSCFLIDSDILVEEDPAPCAFSGNGRQCVMNGTECKGGWVGPNGGITNFDNFAFAMLTVFQCITMEGWTDVLYWVNDAIGCEWPWIYFVSLIILGSFFVLNLVLGVLSGEFSKEREKAKARGDFQKLREKQQLEEDLKGYLDWITQAEDIDPENDEEADEEGKRNRVTLADLMEEKKKSRLSCFGRSSNKHASMPTSETESVNTENVSGEGENPACCGSLCQTISKSKFSRRWRRWNRFNRRKCRAAVKSVTFYWLVIVLVFLNTLTISSEHYNQPDWLTQIQDIANKVLLALFTCEMLVKMYSLGLQAYFVSLFNRFDCFVVCGGIVETILVELEIMSPLGISVFRCVRLLRIFKVTRHWASLSNLVASLLNSMKSIASLLLLLFLFIIIFSLLGMQLFGGKFNFDETQTKRSTFDNFPQALLTVFQILTGEDWNAVMYDGIMAYGGPSSSGMIVCIYFIILFICGNYILLNVFLAIAVDNLADAESLNTAQKEEAEEKERKKNARKESLENKKSEKSEGDQKKPKDSKVTIAEYGEGEDEDKDPYPPCDVPVGEDEEDEEDEPEVPAGPRPRRISELNMKEKITPIPEGSAFFIFSSTNPIRVGCHRLINHHIFTNLILVFIMLSSVSLAAEDPIRSHSFRNNILGYADYVFTSMFTFEIILKMTAFGAFLHKGSFCRNYFNLLDLLVVGVSLVSFGIQSSAISVVKILRVLRVLRPLRAINRAKGLKHVVQCVFVAIRTIGNIMIVTTLLQFMFACIGVQLFKGKFYKCTDEAKQNPEECRGIYIVYKDGDVDNPMVKERVWQNSDFNFDNVLSAMMALFTVSTFEGWPALLYKAIDSNGENVGPVYNYRVEISIFFIIYIIIIAFFMMNIFVGFVIVTFQEQGEQEYKNCELDKNQRQCVEYALKARPLRRYIPKNPYQYKFWYVVNSTGFEYIMFVLIMLNTLCLAMQHYGQSKLFNDAMDIMNMVFTGVFTVEMVLKLIAFKPKIFVRKKERWLGYFSDAWNTFDSLIVIGSIVDVVLSEADPKPTETVTTDESGNSEDSARISITFFRLFRVMRLVKLLSRGEGIRTLLWTFIKSFQALPYVALLIAMLFFIYAVIGMQVFGKVAMRDNNQINRNNNFQTFPQAVLLLFRCATGEAWQEIMLACLPGKRCDPESDYNPGEEYTCGSNFAIIYFISFYMLCAFLIINLFVAVIMDNFDYLTRDWSILGPHHLDEFKRIWSEYDPEAKGRIKHLDVVTLLRRIQPPLGFGKLCPHRVACKRLVAMNMPLNSDGTVMFNATLFALVRTALKIKTEGNLEQANEELRAVIKKIWKKTSMKLLDQVVPPAGDDEVTVGKFYATFLIQDYFRKFKKRKEQGLVGKYPAKNTTIALQAGLRTLHDIGPEIRRAISCDLQDDEPEENNPDEEEEVYKRNGALFGNHINHISSDRRDSFQQINTTHRPLHVQRPSIPSASDTEKNIYPHTGNSVYHNHHNHNSVGKQVPNSTNANLNNANVSKVVHGKHANFGSHEHRSENGYHSYSRADHEKRRRPSSRRTRYYETYIRSDSGDGRRPTICREERDIRDYCNDDHYLGEQEYYSGEEYYEEDSMLSGNRHVYDYHCRHHCHDSDFERPKGYHHPHGFFEEDDSQTCYDTKRSPRRRLLPPTPASNRRSSFNFECLRRQSSQDDIPLSPNFHHRTALPLHLMQQQVMAVAGLDSSKAHKHSPSRSTRSWATPPATPPNRDHTPYYTPLIQVDRAESTEHMNGSLPSLHRSSWYTDDPDISYRTFTPANLTVPNDFRHKHSDKQRSADSLVEAVLISEGLGRYAKDPKFVSATKHEIADACDMTIDEMESAASNLLNGNISNGTNGDMFPILSRQDYELQDFGPGYSDEEPEPGRYEEDLADEMICITSL.

Over residues 1-10 (MQHHQQQQPE) the composition is skewed to low complexity. 2 disordered regions span residues 1-44 (MQHH…SKQT) and 57-96 (QAKA…SNSR). Topologically, residues 1 to 121 (MQHHQQQQPE…RACISLVEWK (121 aa)) are cytoplasmic. Composition is skewed to polar residues over residues 31 to 44 (PTTQ…SKQT) and 63 to 76 (NMNT…GSLS). A compositionally biased stretch (basic residues) spans 77 to 88 (QRKRQQYAKSKK). Residues 108–404 (NPIRRACISL…LVLGVLSGEF (297 aa)) form an I repeat. A helical transmembrane segment spans residues 122–140 (PFDIFILLSIFANCVALAV). Topologically, residues 141 to 158 (YIPFPEDDSNSTNHNLEK) are extracellular. Asparagine 150 is a glycosylation site (N-linked (GlcNAc...) asparagine). Residues 159 to 178 (VEYAFLIIFTVETFLKIIAY) form a helical membrane-spanning segment. Residues 179–190 (GLLLHPNAYVRN) lie on the Cytoplasmic side of the membrane. Residues 191-209 (GWNLLDFVIVVVGLFSVIL) traverse the membrane as a helical segment. The Extracellular segment spans residues 210–230 (EQLTKETEGGSHSGGKPGGFD). The helical transmembrane segment at 231-249 (VKALRAFRVLRPLRLVSGV) threads the bilayer. The Cytoplasmic portion of the chain corresponds to 250 to 268 (PSLQVVLNSIIKAMVPLLH). A helical transmembrane segment spans residues 269-288 (IALLVLFVIIIYAIIGLELF). Residues 289–376 (IGKMHKSCFL…WVNDAIGCEW (88 aa)) lie on the Extracellular side of the membrane. Asparagine 324 carries N-linked (GlcNAc...) asparagine glycosylation. Glutamate 359 contributes to the Ca(2+) binding site. The helical transmembrane segment at 377 to 401 (PWIYFVSLIILGSFFVLNLVLGVLS) threads the bilayer. Residues 402-544 (GEFSKEREKA…RKCRAAVKSV (143 aa)) lie on the Cytoplasmic side of the membrane. Residues 424–441 (QQLEEDLKGYLDWITQAE) are binding to the beta subunit. Residues 478–500 (GRSSNKHASMPTSETESVNTENV) form a disordered region. The stretch at 530–776 (NRFNRRKCRA…VFLAIAVDNL (247 aa)) is one II repeat. A helical transmembrane segment spans residues 545–564 (TFYWLVIVLVFLNTLTISSE). Over 565 to 579 (HYNQPDWLTQIQDIA) the chain is Extracellular. A helical transmembrane segment spans residues 580 to 598 (NKVLLALFTCEMLVKMYSL). The Cytoplasmic segment spans residues 599 to 606 (GLQAYFVS). A helical transmembrane segment spans residues 607 to 625 (LFNRFDCFVVCGGIVETIL). Over 626 to 635 (VELEIMSPLG) the chain is Extracellular. Residues 636-654 (ISVFRCVRLLRIFKVTRHW) traverse the membrane as a helical segment. Topologically, residues 655-673 (ASLSNLVASLLNSMKSIAS) are cytoplasmic. A helical membrane pass occupies residues 674–694 (LLLLLFLFIIIFSLLGMQLFG). The Extracellular portion of the chain corresponds to 695 to 748 (GKFNFDETQTKRSTFDNFPQALLTVFQILTGEDWNAVMYDGIMAYGGPSSSGMI). Glutamate 726 is a Ca(2+) binding site. Residues 749 to 773 (VCIYFIILFICGNYILLNVFLAIAV) form a helical membrane-spanning segment. The Cytoplasmic portion of the chain corresponds to 774–907 (DNLADAESLN…VGCHRLINHH (134 aa)). Positions 787-823 (KEEAEEKERKKNARKESLENKKSEKSEGDQKKPKDSK) are enriched in basic and acidic residues. Residues 787–869 (KEEAEEKERK…VPAGPRPRRI (83 aa)) are disordered. The segment covering 847 to 859 (VGEDEEDEEDEPE) has biased composition (acidic residues). One copy of the III repeat lies at 894–1176 (NPIRVGCHRL…IFVGFVIVTF (283 aa)). Residues 908–926 (IFTNLILVFIMLSSVSLAA) traverse the membrane as a helical segment. At 927-942 (EDPIRSHSFRNNILGY) the chain is on the extracellular side. The helical transmembrane segment at 943-962 (ADYVFTSMFTFEIILKMTAF) threads the bilayer. Residues 963–974 (GAFLHKGSFCRN) are Cytoplasmic-facing. Residues 975–993 (YFNLLDLLVVGVSLVSFGI) form a helical membrane-spanning segment. Over 994–999 (QSSAIS) the chain is Extracellular. Residues 1000-1019 (VVKILRVLRVLRPLRAINRA) form a helical membrane-spanning segment. The Cytoplasmic segment spans residues 1020 to 1038 (KGLKHVVQCVFVAIRTIGN). A helical transmembrane segment spans residues 1039 to 1058 (IMIVTTLLQFMFACIGVQLF). The Extracellular portion of the chain corresponds to 1059–1148 (KGKFYKCTDE…VGPVYNYRVE (90 aa)). The dihydropyridine binding stretch occupies residues 1096 to 1186 (RVWQNSDFNF…QEQGEQEYKN (91 aa)). Residue glutamate 1122 participates in Ca(2+) binding. Residues 1149-1169 (ISIFFIIYIIIIAFFMMNIFV) form a helical membrane-spanning segment. The Cytoplasmic segment spans residues 1170-1226 (GFVIVTFQEQGEQEYKNCELDKNQRQCVEYALKARPLRRYIPKNPYQYKFWYVVNST). The stretch at 1213–1496 (NPYQYKFWYV…LFVAVIMDNF (284 aa)) is one IV repeat. A helical transmembrane segment spans residues 1227–1245 (GFEYIMFVLIMLNTLCLAM). The Extracellular portion of the chain corresponds to 1246–1260 (QHYGQSKLFNDAMDI). A helical transmembrane segment spans residues 1261–1280 (MNMVFTGVFTVEMVLKLIAF). Over 1281–1297 (KPKIFVRKKERWLGYFS) the chain is Cytoplasmic. A helical transmembrane segment spans residues 1298–1319 (DAWNTFDSLIVIGSIVDVVLSE). Residues 1320 to 1342 (ADPKPTETVTTDESGNSEDSARI) are Extracellular-facing. The chain crosses the membrane as a helical span at residues 1343 to 1362 (SITFFRLFRVMRLVKLLSRG). Over 1363–1381 (EGIRTLLWTFIKSFQALPY) the chain is Cytoplasmic. Residues 1382 to 1401 (VALLIAMLFFIYAVIGMQVF) form a helical membrane-spanning segment. Residues 1402–1468 (GKVAMRDNNQ…GEEYTCGSNF (67 aa)) lie on the Extracellular side of the membrane. The dihydropyridine binding stretch occupies residues 1449-1515 (RCDPESDYNP…LGPHHLDEFK (67 aa)). Positions 1461–1504 (EYTCGSNFAIIYFISFYMLCAFLIINLFVAVIMDNFDYLTRDWS) are phenylalkylamine binding. Residues 1469–1493 (AIIYFISFYMLCAFLIINLFVAVIM) form a helical membrane-spanning segment. At 1494 to 2190 (DNFDYLTRDW…ADEMICITSL (697 aa)) the chain is on the cytoplasmic side. Disordered regions lie at residues 1736–1787 (THRP…NANL), 1803–1833 (FGSH…SRRT), 1917–1952 (HGFF…RSSF), and 1995–2025 (SSKA…HTPY). Positions 1805-1823 (SHEHRSENGYHSYSRADHE) are enriched in basic and acidic residues. The span at 1824-1833 (KRRRPSSRRT) shows a compositional bias: basic residues.

This sequence belongs to the calcium channel alpha-1 subunit (TC 1.A.1.11) family. CACNA1D subfamily. Voltage-dependent calcium channels are multisubunit complexes, consisting of alpha-1, alpha-2, beta and delta subunits in a 1:1:1:1 ratio. The channel activity is directed by the pore-forming and voltage-sensitive alpha-1 subunit. In many cases, this subunit is sufficient to generate voltage-sensitive calcium channel activity. The auxiliary subunits beta and alpha-2/delta linked by a disulfide bridge regulate the channel activity. Interacts with RIMBP2. Expressed in the basilar papilla of the cochlea.

Its subcellular location is the membrane. The catalysed reaction is Ca(2+)(in) = Ca(2+)(out). Functionally, the isoform alpha-1D gives rise to L-type calcium currents. Long-lasting (L-type) calcium channels belong to the 'high-voltage activated' (HVA) group. The protein is Voltage-dependent L-type calcium channel subunit alpha-1D (CACNA1D) of Gallus gallus (Chicken).